Consider the following 473-residue polypeptide: Cell division protein FtsZ homolog 2-2, chloroplastic (473 aa).

GTP contacts are provided by residues 124–128 (GGGSN), 213–215 (GTG), glutamate 244, and arginine 248. Threonine 282 is subject to Phosphothreonine; by PGK1. Aspartate 292 contributes to the GTP binding site. The segment at 424–455 (EEGEGRPLQATQADASMGATRRPSSSFTEGSS) is disordered. Over residues 445-454 (RPSSSFTEGS) the composition is skewed to polar residues.

Belongs to the FtsZ family. Aggregates to form a contractile ring-like structure; contraction of the ring was accompanied by an increase in the filament turnover rate. Self-interacts and binds to FTSZ1 in heteropolymers to form two morphologically distinct types of filaments, termed type-I (smooth filaments) and -II (rough filaments), in a GTP-dependent manner. Part of a complex made of ARC3, ARC6, FTSZ1 and FTSZ2. Interacts (via C-terminus) with ARC6. Interacts with CDP1/PARC6. Binds to PGK1. Phosphorylation at Thr-282 is required for the formation of contractile ring at the chloroplast midpoint.

The protein localises to the plastid. It localises to the chloroplast stroma. The protein resides in the chloroplast thylakoid membrane. Its function is as follows. Exhibits GTPase activity. Component of the plastid division machinery that forms a contractile ring at the division site. Contributes to plastid division in the vegetative shoot apex, at the shoot apical meristem (SAM) where the proplastid-to-chloroplast transition takes place. In Arabidopsis thaliana (Mouse-ear cress), this protein is Cell division protein FtsZ homolog 2-2, chloroplastic.